We begin with the raw amino-acid sequence, 468 residues long: Protein ABHD15 (468 aa).

The N-terminal stretch at 1–23 is a signal peptide; it reads MPPWGAALALILAVLALLGLLGP. The segment at 33-61 is disordered; the sequence is VGERTLPGAQDRDDGEEADGGGPADQFSD. Active-site charge relay system residues include aspartate 360 and histidine 391. Residue serine 434 is modified to Phosphoserine.

Belongs to the AB hydrolase superfamily. AB hydrolase 4 family. In terms of assembly, interacts with PDE3B; this interaction regulates PDE3B's stability and expression and, thereby, impacts the antilipolytic action of insulin.

It is found in the secreted. In terms of biological role, may regulate adipocyte lipolysis and liver lipid accumulation. This is Protein ABHD15 from Homo sapiens (Human).